The primary structure comprises 218 residues: Thiopurine S-methyltransferase (218 aa).

Positions 10, 45, 66, and 123 each coordinate S-adenosyl-L-methionine.

This sequence belongs to the class I-like SAM-binding methyltransferase superfamily. TPMT family.

It localises to the cytoplasm. It carries out the reaction S-adenosyl-L-methionine + a thiopurine = S-adenosyl-L-homocysteine + a thiopurine S-methylether.. The sequence is that of Thiopurine S-methyltransferase from Shewanella sp. (strain ANA-3).